A 104-amino-acid polypeptide reads, in one-letter code: MTVKWIEAVALSDILEGDVLGVTVEGKELALYEVEGEIYATDNLCTHGSARMSDGYLEGREIECPLHQGRFDVCTGKALCAPVTQNIKTYPVKIENLRVMIDLS.

The Rieske domain occupies 6–101 (IEAVALSDIL…VKIENLRVMI (96 aa)). [2Fe-2S] cluster contacts are provided by C45, H47, C64, and H67.

Belongs to the bacterial ring-hydroxylating dioxygenase ferredoxin component family. As to quaternary structure, the naphthalene dioxygenase (NDO) multicomponent enzyme system is composed of an electron transfer component and a dioxygenase component (iron sulfur protein (ISP)). The electron transfer component is composed of a ferredoxin reductase (NdoR) and a ferredoxin (NdoA), and the dioxygenase component is formed of a heterohexamer (trimer of heterodimers) of three large alpha subunits (NdoB) and three small beta subunits (NdoC). The cofactor is [2Fe-2S] cluster.

The protein operates within aromatic compound metabolism; naphthalene degradation. In terms of biological role, component of the naphthalene dioxygenase (NDO) multicomponent enzyme system which catalyzes the incorporation of both atoms of molecular oxygen into naphthalene to form cis-(1R,2S)-dihydroxy-1,2-dihydronaphthalene. Functions as an intermediate electron transfer protein via a specific interaction with iron sulfur protein components (ISP) (NdoB and NdoC). Also able to catalyze the cis-dihydroxylation of biphenyl and phenanthrene. The protein is Naphthalene 1,2-dioxygenase system, ferredoxin component of Pseudomonas putida (Arthrobacter siderocapsulatus).